We begin with the raw amino-acid sequence, 68 residues long: uncharacterized protein (68 aa).

The first 27 residues, 1 to 27 (MKGLLCFIYILSAILIGCVFLNKDVEA), serve as a signal peptide directing secretion.

This is an uncharacterized protein from Invertebrate iridescent virus 6 (IIV-6).